A 123-amino-acid chain; its full sequence is MADLKKLAEEIVGLTLLEAQELKTILKDEYGIEPAAGGAVMMAGPADAGAAEEEKTEFDVVLKSPGASKINVIKEVRGITGLGLKEAKDLVEAGGKIKEGCDKAEAEEIKGKLEAAGAEVELA.

It belongs to the bacterial ribosomal protein bL12 family. As to quaternary structure, homodimer. Part of the ribosomal stalk of the 50S ribosomal subunit. Forms a multimeric L10(L12)X complex, where L10 forms an elongated spine to which 2 to 4 L12 dimers bind in a sequential fashion. Binds GTP-bound translation factors.

In terms of biological role, forms part of the ribosomal stalk which helps the ribosome interact with GTP-bound translation factors. Is thus essential for accurate translation. This chain is Large ribosomal subunit protein bL12, found in Roseobacter denitrificans (strain ATCC 33942 / OCh 114) (Erythrobacter sp. (strain OCh 114)).